The primary structure comprises 79 residues: Serine protease inhibitor Kazal-type 1 (79 aa).

A signal peptide spans 1–18; sequence MKVAIIFLLSALALLSLA. Positions 26-79 constitute a Kazal-like domain; the sequence is NGKTPNCPKQIMGCPRIYDPVCGTNGITYPSECSLCFENRKFGTSIHIQRRGTC. 3 disulfides stabilise this stretch: Cys-32–Cys-61, Cys-39–Cys-58, and Cys-47–Cys-79.

The protein resides in the secreted. Functionally, serine protease inhibitor which exhibits anti-trypsin activity. In the pancreas, protects against trypsin-catalyzed premature activation of zymogens. In terms of biological role, in the male reproductive tract, binds to sperm heads where it modulates sperm capacitance by inhibiting calcium uptake and nitrogen oxide (NO) production. This Rattus norvegicus (Rat) protein is Serine protease inhibitor Kazal-type 1.